The chain runs to 730 residues: Regulatory factor X 4 (730 aa).

A compositionally biased stretch (polar residues) spans 30–41 (YSSHTSLGNISN). The interval 30–59 (YSSHTSLGNISNDETDEEKENRASKPHSTP) is disordered. The segment at residues 61–136 (TLQWLGENYE…YHYYGIAVKE (76 aa)) is a DNA-binding region (RFX-type winged-helix). The tract at residues 500 to 532 (EPAISTPSPVPFSPAASSSSVEIPSATSPVSNQ) is disordered. The segment covering 512 to 528 (SPAASSSSVEIPSATSP) has biased composition (low complexity).

Belongs to the RFX family.

It is found in the nucleus. In terms of biological role, required for neural tube ciliogenesis during embryogenesis. The polypeptide is Regulatory factor X 4 (Xenopus laevis (African clawed frog)).